The sequence spans 226 residues: Protein YAE1 homolog (226 aa).

Residues 45–85 (GYRDGIDAGKAVTLQQGFNQGYKKGAEVILNYGRLRGTLSA) are deca-GX3 motif; required for interaction with LTO1.

In terms of assembly, forms a complex with LTO1.

The protein resides in the cytoplasm. Its subcellular location is the nucleus. In terms of biological role, the complex LTO1:YAE1 functions as a target specific adapter that probably recruits apo-ABCE1 to the cytosolic iron-sulfur protein assembly (CIA) complex machinery. May be required for biogenesis of the large ribosomal subunit and initiation of translation. The protein is Protein YAE1 homolog of Homo sapiens (Human).